The primary structure comprises 440 residues: MSEFSQTVPELVAWARKNDFSISLPVDRLSFLLAVATLNGERLDGEMSEGELVDAFRHVSDAFEQTSETIGVRANNAINDMVRQRLLNRFTSEQAEGNAIYRLTPLGIGITDYYIRQREFSTLRLSMQLSIVAGELKRAADAAEEGGDEFHWHRNVYAPLKYSVAEIFDSIDLTQRLMDEQQQQVKDDIAQLLNKDWRAAISSCELLLSETSGTLRELQDTLEAAGDKLQANLLRIQDATMTHDDLHFVDRLVFDLQSKLDRIISWGQQSIDLWIGYDRHVHKFIRTAIDMDKNRVFAQRLRQSVQTYFDEPWALTYANADRLLDMRDEEMVLRDEEVTGELPEDLEYEEFNEIREQLAAIIEEQLAVYKTRQVPLDLGLVVREYLSQYPRARHFDVARIVIDQAVRLGVAQADFTGLPAKWQPINDYGAKVQAHVIDKY.

The tract at residues 208–236 (LSETSGTLRELQDTLEAAGDKLQANLLRI) is leucine-zipper.

The protein belongs to the MukF family. In terms of assembly, interacts, and probably forms a ternary complex, with MukE and MukB via its C-terminal region. The complex formation is stimulated by calcium or magnesium. It is required for an interaction between MukE and MukB.

The protein localises to the cytoplasm. The protein resides in the nucleoid. In terms of biological role, involved in chromosome condensation, segregation and cell cycle progression. May participate in facilitating chromosome segregation by condensation DNA from both sides of a centrally located replisome during cell division. Not required for mini-F plasmid partitioning. Probably acts via its interaction with MukB and MukE. Overexpression results in anucleate cells. It has a calcium binding activity. This is Chromosome partition protein MukF from Escherichia coli (strain UTI89 / UPEC).